Consider the following 588-residue polypeptide: Aspartate--tRNA ligase (588 aa).

E172 contacts L-aspartate. The aspartate stretch occupies residues 196-199 (QLFK). R218 provides a ligand contact to L-aspartate. ATP-binding positions include 218–220 (RDE) and Q227. H449 provides a ligand contact to L-aspartate. Residue E483 coordinates ATP. R490 serves as a coordination point for L-aspartate. 535–538 (GLDR) contacts ATP.

The protein belongs to the class-II aminoacyl-tRNA synthetase family. Type 1 subfamily. As to quaternary structure, homodimer.

The protein resides in the cytoplasm. The catalysed reaction is tRNA(Asp) + L-aspartate + ATP = L-aspartyl-tRNA(Asp) + AMP + diphosphate. Functionally, catalyzes the attachment of L-aspartate to tRNA(Asp) in a two-step reaction: L-aspartate is first activated by ATP to form Asp-AMP and then transferred to the acceptor end of tRNA(Asp). This Haemophilus influenzae (strain 86-028NP) protein is Aspartate--tRNA ligase.